A 392-amino-acid chain; its full sequence is 1-deoxy-D-xylulose 5-phosphate reductoisomerase (392 aa).

NADPH contacts are provided by T10, G11, S12, I13, N38, and N124. K125 contacts 1-deoxy-D-xylulose 5-phosphate. E126 is a binding site for NADPH. D150 lines the Mn(2+) pocket. Residues S151, E152, S176, and H199 each coordinate 1-deoxy-D-xylulose 5-phosphate. E152 contributes to the Mn(2+) binding site. Position 205 (G205) interacts with NADPH. 4 residues coordinate 1-deoxy-D-xylulose 5-phosphate: S212, N217, K218, and E221. E221 contributes to the Mn(2+) binding site.

Belongs to the DXR family. Mg(2+) is required as a cofactor. Mn(2+) serves as cofactor.

The catalysed reaction is 2-C-methyl-D-erythritol 4-phosphate + NADP(+) = 1-deoxy-D-xylulose 5-phosphate + NADPH + H(+). Its pathway is isoprenoid biosynthesis; isopentenyl diphosphate biosynthesis via DXP pathway; isopentenyl diphosphate from 1-deoxy-D-xylulose 5-phosphate: step 1/6. Functionally, catalyzes the NADPH-dependent rearrangement and reduction of 1-deoxy-D-xylulose-5-phosphate (DXP) to 2-C-methyl-D-erythritol 4-phosphate (MEP). The chain is 1-deoxy-D-xylulose 5-phosphate reductoisomerase from Gloeobacter violaceus (strain ATCC 29082 / PCC 7421).